The sequence spans 215 residues: Interleukin-12 subunit alpha (215 aa).

An N-terminal signal peptide occupies residues 1 to 22 (MCQSRYLLFLATLVLLNHLTSA). Cystine bridges form between Cys33/Cys106, Cys60/Cys192, and Cys81/Cys119. N-linked (GlcNAc...) asparagine glycosylation is found at Asn35, Asn89, and Asn167.

It belongs to the IL-6 superfamily. Heterodimer with IL12B; disulfide-linked. This heterodimer is known as interleukin IL-12. Heterodimer with EBI3/IL27B; not disulfide-linked. This heterodimer is known as interleukin IL-35. Interacts with NBR1; this interaction promotes IL-12 secretion.

The protein resides in the secreted. In terms of biological role, heterodimerizes with IL12B to form the IL-12 cytokine or with EBI3/IL27B to form the IL-35 cytokine. IL-12 is primarily produced by professional antigen-presenting cells (APCs) such as B-cells and dendritic cells (DCs) as well as macrophages and granulocytes and regulates T-cell and natural killer-cell responses, induces the production of interferon-gamma (IFN-gamma), favors the differentiation of T-helper 1 (Th1) cells and is an important link between innate resistance and adaptive immunity. Mechanistically, exerts its biological effects through a receptor composed of IL12R1 and IL12R2 subunits. Binding to the receptor results in the rapid tyrosine phosphorylation of a number of cellular substrates including the JAK family kinases TYK2 and JAK2. In turn, recruited STAT4 gets phosphorylated and translocates to the nucleus where it regulates cytokine/growth factor responsive genes. As part of IL-35, plays essential roles in maintaining the immune homeostasis of the liver microenvironment and also functions as an immune-suppressive cytokine. Mediates biological events through unconventional receptors composed of IL12RB2 and gp130/IL6ST heterodimers or homodimers. Signaling requires the transcription factors STAT1 and STAT4, which form a unique heterodimer that binds to distinct DNA sites. The polypeptide is Interleukin-12 subunit alpha (Il12a) (Rattus norvegicus (Rat)).